The chain runs to 360 residues: DNA replication and repair protein RecF (360 aa).

33 to 40 is an ATP binding site; it reads GENGSGKT.

Belongs to the RecF family.

Its subcellular location is the cytoplasm. Its function is as follows. The RecF protein is involved in DNA metabolism; it is required for DNA replication and normal SOS inducibility. RecF binds preferentially to single-stranded, linear DNA. It also seems to bind ATP. In Rickettsia peacockii (strain Rustic), this protein is DNA replication and repair protein RecF.